We begin with the raw amino-acid sequence, 452 residues long: tRNA-2-methylthio-N(6)-dimethylallyladenosine synthase (452 aa).

One can recognise an MTTase N-terminal domain in the interval 3-118 (KKVFIKTYGC…LPQLLAERER (116 aa)). [4Fe-4S] cluster is bound by residues cysteine 12, cysteine 49, cysteine 81, cysteine 155, cysteine 159, and cysteine 162. The Radical SAM core domain maps to 141–379 (RVEGASAFVS…QTVINDSIKR (239 aa)). The region spanning 382–445 (ESRLGTVQRI…SFTLRGEVVT (64 aa)) is the TRAM domain.

Belongs to the methylthiotransferase family. MiaB subfamily. Monomer. The cofactor is [4Fe-4S] cluster.

It localises to the cytoplasm. It catalyses the reaction N(6)-dimethylallyladenosine(37) in tRNA + (sulfur carrier)-SH + AH2 + 2 S-adenosyl-L-methionine = 2-methylsulfanyl-N(6)-dimethylallyladenosine(37) in tRNA + (sulfur carrier)-H + 5'-deoxyadenosine + L-methionine + A + S-adenosyl-L-homocysteine + 2 H(+). Its function is as follows. Catalyzes the methylthiolation of N6-(dimethylallyl)adenosine (i(6)A), leading to the formation of 2-methylthio-N6-(dimethylallyl)adenosine (ms(2)i(6)A) at position 37 in tRNAs that read codons beginning with uridine. This is tRNA-2-methylthio-N(6)-dimethylallyladenosine synthase from Albidiferax ferrireducens (strain ATCC BAA-621 / DSM 15236 / T118) (Rhodoferax ferrireducens).